The chain runs to 810 residues: Protein 4.1 (810 aa).

The tract at residues 1–124 is disordered; it reads MTTEKSLVAE…KEIEFGTSLD (124 aa). The residue at position 14 (serine 14) is a Phosphoserine. Threonine 61 is subject to Phosphothreonine. Residues 62–76 show a composition bias toward basic and acidic residues; it reads PTHEDLTKNKERTSE. 10 positions are modified to phosphoserine: serine 85, serine 86, serine 96, serine 105, serine 122, serine 150, serine 152, serine 153, serine 189, and serine 192. Residues 102–118 show a composition bias toward basic and acidic residues; sequence DVESAKEKCEGGQKEIE. The interval 152–203 is disordered; that stretch reads SSAETQPAQEEHREDPDFETKEGGGLEECSKIEVKEESPESKAERELKASQK. Residues 160 to 200 show a composition bias toward basic and acidic residues; sequence QEEHREDPDFETKEGGGLEECSKIEVKEESPESKAERELKA. The FERM domain maps to 211–492; sequence MHCKVSLLDD…EHHTFFRLTS (282 aa). Tyrosine 223 bears the Phosphotyrosine mark. Threonine 379 carries the post-translational modification Phosphothreonine. Positions 518 to 613 are disordered; that stretch reads TRQASALIDR…DQAEPEPTEV (96 aa). 4 positions are modified to phosphoserine: serine 522, serine 541, serine 543, and serine 555. The span at 587-601 shows a compositional bias: basic and acidic residues; sequence AQKETVKDEEKKEEG. Residues 615 to 659 are spectrin--actin-binding; that stretch reads KDLDKSQEEIKKHHASISELKKNFMESVPEPRPSEWDKRLSTHSP. Phosphoserine is present on residues serine 620, serine 630, serine 655, and serine 658. Residues 660–810 are C-terminal (CTD); the sequence is FRTLNINGQL…VHQETEISEE (151 aa). Residues threonine 682 and threonine 805 each carry the phosphothreonine modification.

Binds with a high affinity to glycophorin and with lower affinity to band III protein. Associates with the nuclear mitotic apparatus. Binds calmodulin, CPAP and DLG1. Also found to associate with contractile apparatus and tight junctions. Interacts with NUMA1; this interaction is negatively regulated by CDK1 during metaphase and promotes for anaphase-specific localization of NUMA1 in symmetrically dividing cells. Interacts with ATP2B1; regulates small intestinal calcium absorption through regulation of membrane expression of ATP2B1. Post-translationally, O-glycosylated; contains N-acetylglucosamine side chains in the C-terminal domain. In terms of processing, phosphorylated at multiple sites by different protein kinases and each phosphorylation event selectively modulates the protein's functions.

It is found in the nucleus. Its subcellular location is the cytoplasm. The protein resides in the cytoskeleton. It localises to the cell cortex. Protein 4.1 is a major structural element of the erythrocyte membrane skeleton. It plays a key role in regulating membrane physical properties of mechanical stability and deformability by stabilizing spectrin-actin interaction. Recruits DLG1 to membranes. Required for dynein-dynactin complex and NUMA1 recruitment at the mitotic cell cortex during anaphase. The sequence is that of Protein 4.1 from Canis lupus familiaris (Dog).